The following is a 403-amino-acid chain: Betaine--homocysteine S-methyltransferase 1 (403 aa).

Residues 8-311 (KGLLERLDAG…YHTRAIAEEL (304 aa)) form the Hcy-binding domain. 3 residues coordinate Zn(2+): cysteine 214, cysteine 296, and cysteine 297.

As to quaternary structure, homotetramer. Zn(2+) serves as cofactor.

The protein resides in the cytoplasm. It catalyses the reaction L-homocysteine + glycine betaine = N,N-dimethylglycine + L-methionine. The protein operates within amine and polyamine degradation; betaine degradation; sarcosine from betaine: step 1/2. It functions in the pathway amino-acid biosynthesis; L-methionine biosynthesis via de novo pathway; L-methionine from L-homocysteine (BhmT route): step 1/1. In terms of biological role, involved in the regulation of homocysteine metabolism. Converts betaine and homocysteine to dimethylglycine and methionine, respectively. This reaction is also required for the irreversible oxidation of choline. This is Betaine--homocysteine S-methyltransferase 1 (bhmt) from Xenopus tropicalis (Western clawed frog).